A 213-amino-acid polypeptide reads, in one-letter code: Ribosome maturation factor RimM (213 aa).

The 77-residue stretch at 99-175 folds into the PRC barrel domain; sequence DQDAAYISDL…RITMRLPEGL (77 aa). Positions 182 to 213 are disordered; it reads TATAREPRARRTRKRGLRKPITGADATPPDSQ. The segment covering 189 to 199 has biased composition (basic residues); the sequence is RARRTRKRGLR.

It belongs to the RimM family. Binds ribosomal protein uS19.

The protein resides in the cytoplasm. Functionally, an accessory protein needed during the final step in the assembly of 30S ribosomal subunit, possibly for assembly of the head region. Essential for efficient processing of 16S rRNA. May be needed both before and after RbfA during the maturation of 16S rRNA. It has affinity for free ribosomal 30S subunits but not for 70S ribosomes. The polypeptide is Ribosome maturation factor RimM (Acidobacterium capsulatum (strain ATCC 51196 / DSM 11244 / BCRC 80197 / JCM 7670 / NBRC 15755 / NCIMB 13165 / 161)).